The sequence spans 177 residues: Cyclic pyranopterin monophosphate synthase 3 (177 aa).

Substrate is bound by residues 79–81 (LCH) and 116–117 (ME). The active site involves Asp131. The interval 150–177 (KSGGRSGHYRRHDADVKPSDGGSTEDGC) is disordered.

This sequence belongs to the MoaC family. In terms of assembly, homohexamer; trimer of dimers.

It catalyses the reaction (8S)-3',8-cyclo-7,8-dihydroguanosine 5'-triphosphate = cyclic pyranopterin phosphate + diphosphate. It functions in the pathway cofactor biosynthesis; molybdopterin biosynthesis. Catalyzes the conversion of (8S)-3',8-cyclo-7,8-dihydroguanosine 5'-triphosphate to cyclic pyranopterin monophosphate (cPMP). This Mycobacterium bovis (strain ATCC BAA-935 / AF2122/97) protein is Cyclic pyranopterin monophosphate synthase 3 (moaC3).